We begin with the raw amino-acid sequence, 128 residues long: Ribosome-binding factor A (128 aa).

Belongs to the RbfA family. As to quaternary structure, monomer. Binds 30S ribosomal subunits, but not 50S ribosomal subunits or 70S ribosomes.

It localises to the cytoplasm. Its function is as follows. One of several proteins that assist in the late maturation steps of the functional core of the 30S ribosomal subunit. Associates with free 30S ribosomal subunits (but not with 30S subunits that are part of 70S ribosomes or polysomes). Required for efficient processing of 16S rRNA. May interact with the 5'-terminal helix region of 16S rRNA. In Geobacillus thermodenitrificans (strain NG80-2), this protein is Ribosome-binding factor A.